The primary structure comprises 342 residues: Glycerol-3-phosphate dehydrogenase [NAD(P)+] (342 aa).

Residues Trp11, Arg31, and Lys102 each contribute to the NADPH site. Positions 102 and 132 each coordinate sn-glycerol 3-phosphate. Ala136 is an NADPH binding site. The sn-glycerol 3-phosphate site is built by Lys187, Asp240, Ser250, Arg251, and Asn252. Lys187 serves as the catalytic Proton acceptor. NADPH is bound at residue Arg251. Residue Glu277 coordinates NADPH.

It belongs to the NAD-dependent glycerol-3-phosphate dehydrogenase family.

It localises to the cytoplasm. It carries out the reaction sn-glycerol 3-phosphate + NAD(+) = dihydroxyacetone phosphate + NADH + H(+). It catalyses the reaction sn-glycerol 3-phosphate + NADP(+) = dihydroxyacetone phosphate + NADPH + H(+). It participates in membrane lipid metabolism; glycerophospholipid metabolism. Its function is as follows. Catalyzes the reduction of the glycolytic intermediate dihydroxyacetone phosphate (DHAP) to sn-glycerol 3-phosphate (G3P), the key precursor for phospholipid synthesis. This is Glycerol-3-phosphate dehydrogenase [NAD(P)+] from Symbiobacterium thermophilum (strain DSM 24528 / JCM 14929 / IAM 14863 / T).